We begin with the raw amino-acid sequence, 160 residues long: AP-1 complex subunit sigma-2 (160 aa).

The protein belongs to the adaptor complexes small subunit family. In terms of assembly, adaptor protein complex 1 (AP-1) is a heterotetramer composed of two large adaptins (gamma-type subunit AP1G1 and beta-type subunit AP1B1), a medium adaptin (mu-type subunit AP1M1 or AP1M2) and a small adaptin (sigma-type subunit AP1S1 or AP1S2 or AP1S3). Binds to MUC1. As to expression, widely expressed.

The protein localises to the golgi apparatus. It localises to the cytoplasmic vesicle membrane. The protein resides in the membrane. Its subcellular location is the clathrin-coated pit. In terms of biological role, subunit of clathrin-associated adaptor protein complex 1 that plays a role in protein sorting in the late-Golgi/trans-Golgi network (TGN) and/or endosomes. The AP complexes mediate both the recruitment of clathrin to membranes and the recognition of sorting signals within the cytosolic tails of transmembrane cargo molecules. This is AP-1 complex subunit sigma-2 (Ap1s2) from Mus musculus (Mouse).